A 471-amino-acid chain; its full sequence is Argininosuccinate lyase (471 aa).

Belongs to the lyase 1 family. Argininosuccinate lyase subfamily.

It is found in the cytoplasm. It carries out the reaction 2-(N(omega)-L-arginino)succinate = fumarate + L-arginine. The protein operates within amino-acid biosynthesis; L-arginine biosynthesis; L-arginine from L-ornithine and carbamoyl phosphate: step 3/3. This is Argininosuccinate lyase from Ehrlichia canis (strain Jake).